The following is a 240-amino-acid chain: tRNA (guanine-N(1)-)-methyltransferase (240 aa).

S-adenosyl-L-methionine-binding positions include Gly108 and 127–132 (LGDYIL).

It belongs to the RNA methyltransferase TrmD family. Homodimer.

Its subcellular location is the cytoplasm. It carries out the reaction guanosine(37) in tRNA + S-adenosyl-L-methionine = N(1)-methylguanosine(37) in tRNA + S-adenosyl-L-homocysteine + H(+). In terms of biological role, specifically methylates guanosine-37 in various tRNAs. The protein is tRNA (guanine-N(1)-)-methyltransferase of Streptococcus sanguinis (strain SK36).